We begin with the raw amino-acid sequence, 155 residues long: Catabolic 3-dehydroquinase (155 aa).

The active-site Proton acceptor is the Tyr-24. The substrate site is built by Asn-75, His-81, and Asp-88. The active-site Proton donor is the His-101. Residues 102-103 (VS) and Arg-112 contribute to the substrate site.

It belongs to the type-II 3-dehydroquinase family. Homododecamer. Adopts a ring-like structure, composed of an arrangement of two hexameric rings stacked on top of one another.

The enzyme catalyses 3-dehydroquinate = 3-dehydroshikimate + H2O. It participates in aromatic compound metabolism; 3,4-dihydroxybenzoate biosynthesis; 3,4-dihydroxybenzoate from 3-dehydroquinate: step 1/2. In terms of biological role, is involved in the catabolism of quinate. Allows the utilization of quinate as carbon source via the beta-ketoadipate pathway. The protein is Catabolic 3-dehydroquinase of Penicillium rubens (strain ATCC 28089 / DSM 1075 / NRRL 1951 / Wisconsin 54-1255) (Penicillium chrysogenum).